We begin with the raw amino-acid sequence, 692 residues long: Highly divergent homeobox (692 aa).

The segment at residues 3–63 (LRSVFTVEQQ…NKRRKMSSKS (61 aa)) is a DNA-binding region (homeobox 1). The span at 117–133 (SSSSKQGTTKHTNTQIT) shows a compositional bias: polar residues. A disordered region spans residues 117–136 (SSSSKQGTTKHTNTQITEAH). Glycyl lysine isopeptide (Lys-Gly) (interchain with G-Cter in SUMO2) cross-links involve residues K137, K142, K146, K165, K174, K196, K214, K223, and K234. Positions 437–500 (ALQDRTQFSD…NRRRKYRLMG (64 aa)) form a DNA-binding region, homeobox 2. Disordered regions lie at residues 505–541 (PPRG…DNDR) and 647–692 (KDQQ…SDSL). Positions 676–692 (TSLSVSSLSEKNASDSL) are enriched in polar residues.

It localises to the nucleus. This chain is Highly divergent homeobox (Hdx), found in Mus musculus (Mouse).